The following is a 55-amino-acid chain: Large ribosomal subunit protein bL33 (55 aa).

Belongs to the bacterial ribosomal protein bL33 family.

This Arthrobacter sp. (strain FB24) protein is Large ribosomal subunit protein bL33.